Here is a 3421-residue protein sequence, read N- to C-terminus: Large tegument protein deneddylase (3421 aa).

A deubiquitination activity region spans residues 1–248 (MAQTLVPANK…SETYLSDEQY (248 aa)). One can recognise a Peptidase C76 domain in the interval 19-238 (VVIGYRNQYD…ISATSLLYGI (220 aa)). Residues C39, D172, and H174 contribute to the active site. The interval 311-351 (QPTEKRVSLPKRRRPPWTPPTSSENLTTSGNTHTVAGRPSQ) is disordered. Positions 332–344 (SSENLTTSGNTHT) are enriched in polar residues. The interaction with inner tegument protein stretch occupies residues 482–508 (LEQFITMIFNRLLSFLVENGARTRTDS). Disordered stretches follow at residues 2407-2442 (ESNP…PTGI) and 2479-3195 (SNAM…RKNI). Positions 2415-2432 (SHDSSQSLDVPSSPSSGS) are enriched in low complexity. Pro residues-rich tracts occupy residues 2506 to 2516 (TLPPKAAPLPP), 2541 to 2556 (PSVP…PPLP), 2565 to 2577 (GPPP…PPLP), 2586 to 2598 (GPPP…PPLP), and 2607 to 2619 (GPPP…PPLP). Polar residues-rich tracts occupy residues 2620–2637 (QSTS…SGKT) and 2778–2787 (SDSNVTQSTK). The segment covering 2797 to 2857 (PAAAPAKSAA…SAAAPAAAPA (61 aa)) has biased composition (low complexity). The segment covering 2869-2895 (KPAKDQAKDQAKDQAKDQAKDQAKDQA) has biased composition (basic and acidic residues). Over residues 2953–2969 (LSASKNSHTTDAVSSDR) the composition is skewed to polar residues. 2 stretches are compositionally biased toward basic and acidic residues: residues 3023–3040 (RKSD…RRAF) and 3088–3097 (CSEEPKRPTG). Positions 3120-3146 (IPQNQNTSESPRTTSLKSPTRTVQSSM) are enriched in polar residues. The span at 3171 to 3188 (PQPPPANQTPPPQEPPAP) shows a compositional bias: pro residues.

It belongs to the herpesviridae large tegument protein family. As to quaternary structure, interacts with host CUL1 and CUL4A; these interactions inhibit the E3 ligase activity of cullins. Interacts with inner tegument protein. Interacts with capsid vertex specific component CVC2. Interacts with the major capsid protein/MCP.

The protein localises to the virion tegument. It localises to the host cytoplasm. The protein resides in the host nucleus. It catalyses the reaction Thiol-dependent hydrolysis of ester, thioester, amide, peptide and isopeptide bonds formed by the C-terminal Gly of ubiquitin (a 76-residue protein attached to proteins as an intracellular targeting signal).. Functionally, large tegument protein that plays multiple roles in the viral cycle. During viral entry, remains associated with the capsid while most of the tegument is detached and participates in the capsid transport toward the host nucleus. Plays a role in the routing of the capsid at the nuclear pore complex and subsequent uncoating. Within the host nucleus, acts as a deneddylase and promotes the degradation of nuclear CRLs (cullin-RING ubiquitin ligases) and thereby stabilizes nuclear CRL substrates, while cytoplasmic CRLs remain unaffected. These modifications prevent host cell cycle S-phase progression and create a favorable environment allowing efficient viral genome replication. Participates later in the secondary envelopment of capsids. Indeed, plays a linker role for the association of the outer viral tegument to the capsids together with the inner tegument protein. The polypeptide is Large tegument protein deneddylase (Equus caballus (Horse)).